An 83-amino-acid chain; its full sequence is Conotoxin VnMKLT1-022 (83 aa).

An N-terminal signal peptide occupies residues 1 to 22 (MKLMCMMIVAVLFLTAWTFVTA). Residues 23-55 (DDSINGPENRRIWEKLLSKTRDEMKNPEASKLN) constitute a propeptide that is removed on maturation. Cystine bridges form between cysteine 59-cysteine 74, cysteine 66-cysteine 78, and cysteine 73-cysteine 82.

Belongs to the conotoxin O1 superfamily. In terms of tissue distribution, expressed by the venom duct.

The protein resides in the secreted. This chain is Conotoxin VnMKLT1-022, found in Conus ventricosus (Mediterranean cone).